The primary structure comprises 424 residues: Serine--tRNA ligase (424 aa).

L-serine is bound at residue Thr230–Glu232. Arg261–Glu263 contacts ATP. Glu284 is a binding site for L-serine. Glu348–Ser351 is a binding site for ATP. Ser384 lines the L-serine pocket.

It belongs to the class-II aminoacyl-tRNA synthetase family. Type-1 seryl-tRNA synthetase subfamily. In terms of assembly, homodimer. The tRNA molecule binds across the dimer.

The protein localises to the cytoplasm. It catalyses the reaction tRNA(Ser) + L-serine + ATP = L-seryl-tRNA(Ser) + AMP + diphosphate + H(+). The catalysed reaction is tRNA(Sec) + L-serine + ATP = L-seryl-tRNA(Sec) + AMP + diphosphate + H(+). The protein operates within aminoacyl-tRNA biosynthesis; selenocysteinyl-tRNA(Sec) biosynthesis; L-seryl-tRNA(Sec) from L-serine and tRNA(Sec): step 1/1. In terms of biological role, catalyzes the attachment of serine to tRNA(Ser). Is also able to aminoacylate tRNA(Sec) with serine, to form the misacylated tRNA L-seryl-tRNA(Sec), which will be further converted into selenocysteinyl-tRNA(Sec). This Streptococcus pneumoniae serotype 4 (strain ATCC BAA-334 / TIGR4) protein is Serine--tRNA ligase.